A 323-amino-acid chain; its full sequence is tRNA U34 carboxymethyltransferase (323 aa).

Residues K91, W105, K110, G130, D152–T154, I181–E182, M196, Y200, and R315 each bind carboxy-S-adenosyl-L-methionine.

Belongs to the class I-like SAM-binding methyltransferase superfamily. CmoB family. As to quaternary structure, homotetramer.

The catalysed reaction is carboxy-S-adenosyl-L-methionine + 5-hydroxyuridine(34) in tRNA = 5-carboxymethoxyuridine(34) in tRNA + S-adenosyl-L-homocysteine + H(+). Functionally, catalyzes carboxymethyl transfer from carboxy-S-adenosyl-L-methionine (Cx-SAM) to 5-hydroxyuridine (ho5U) to form 5-carboxymethoxyuridine (cmo5U) at position 34 in tRNAs. The protein is tRNA U34 carboxymethyltransferase of Escherichia coli (strain SE11).